Reading from the N-terminus, the 75-residue chain is Conotoxin Vn5.5 (75 aa).

The first 19 residues, 1–19, serve as a signal peptide directing secretion; the sequence is MLCLPVFIILLLLASPAAP. Positions 20-59 are excised as a propeptide; sequence NPLEKRIQSDLIRAALEDADMKTDEREIVNIIDSISDVAK. Q60 bears the Pyrrolidone carboxylic acid mark.

The protein belongs to the conotoxin T superfamily. Contains 2 disulfide bonds that can be either 'C1-C3, C2-C4' or 'C1-C4, C2-C3', since these disulfide connectivities have been observed for conotoxins with cysteine framework V (for examples, see AC P0DQQ7 and AC P81755). As to expression, expressed by the venom duct.

The protein resides in the secreted. The sequence is that of Conotoxin Vn5.5 from Conus ventricosus (Mediterranean cone).